A 522-amino-acid polypeptide reads, in one-letter code: Biotin-dependent long chain acyl-coenzyme A carboxylase beta4 subunit (522 aa).

One can recognise a CoA carboxyltransferase N-terminal domain in the interval 11 to 261 (TAEKLAELRE…NCFDKPPVVN (251 aa)). One can recognise a CoA carboxyltransferase C-terminal domain in the interval 270-503 (GHDLELDSIV…RLLLRKSMHL (234 aa)).

It belongs to the AccD/PCCB family. The biotin-dependent long-chain acyl-CoA carboxylase (LCC) complex is composed of AccA3, which contains the biotin carboxylase (BC) and biotin carboxyl carrier protein (BCCP) domains, and AccD4, which contains the carboxyl transferase (CT) domain. The complex also contains the beta5 subunit AccD5 and the epsilon subunit AccE5. The four subunits are essential for activity, but AccD5, together with AccE5, probably plays a structural role rather than a catalytic one.

In terms of biological role, component of a biotin-dependent acyl-CoA carboxylase complex. This subunit transfers the CO2 from carboxybiotin to the CoA ester substrate. When associated with the alpha3 subunit AccA3, the beta5 subunit AccD5 and the epsilon subunit AccE5, forms the LCC complex, which is involved in the carboxylation of long chain acyl-CoA. The LCC complex can use C16-C24 substrates, the highest specific activity is obtained with carboxy-C20-CoA. Has low activity with acetyl-CoA and propionyl-CoA. This Mycobacterium tuberculosis (strain ATCC 25618 / H37Rv) protein is Biotin-dependent long chain acyl-coenzyme A carboxylase beta4 subunit.